The following is a 192-amino-acid chain: Shikimate kinase (192 aa).

32 to 37 (GAGKSA) lines the ATP pocket. A Mg(2+)-binding site is contributed by Ser-36. Positions 54, 78, and 100 each coordinate substrate. Arg-138 is an ATP binding site. Substrate is bound at residue Arg-157.

This sequence belongs to the shikimate kinase family. As to quaternary structure, monomer. Requires Mg(2+) as cofactor.

It is found in the cytoplasm. It catalyses the reaction shikimate + ATP = 3-phosphoshikimate + ADP + H(+). It participates in metabolic intermediate biosynthesis; chorismate biosynthesis; chorismate from D-erythrose 4-phosphate and phosphoenolpyruvate: step 5/7. In terms of biological role, catalyzes the specific phosphorylation of the 3-hydroxyl group of shikimic acid using ATP as a cosubstrate. The sequence is that of Shikimate kinase from Rhizobium meliloti (strain 1021) (Ensifer meliloti).